The chain runs to 248 residues: DnaA regulatory inactivator Hda (248 aa).

This sequence belongs to the DnaA family. HdA subfamily. In terms of assembly, the active form seems to be an ADP-bound monomer. Forms the RIDA complex (regulatory inactivation of DnaA) of ATP-DnaA, ADP-Hda and the DNA-loaded beta sliding clamp (dnaN).

Its function is as follows. Mediates the interaction of DNA replication initiator protein DnaA with DNA polymerase subunit beta sliding clamp (dnaN). Stimulates hydrolysis of ATP-DnaA to ADP-DnaA, rendering DnaA inactive for reinitiation, a process called regulatory inhibition of DnaA or RIDA. The protein is DnaA regulatory inactivator Hda of Proteus mirabilis (strain HI4320).